A 377-amino-acid polypeptide reads, in one-letter code: Chaperone protein DnaJ (377 aa).

A J domain is found at 3–67; it reads DYYDLLGVGR…QTRARYDQFG (65 aa). The CR-type zinc-finger motif lies at 133-215; that stretch reads GQEQEIKIPH…CGGQGVRQVR (83 aa). The Zn(2+) site is built by C146, C149, C163, C166, C189, C192, C203, and C206. 4 CXXCXGXG motif repeats span residues 146-153, 163-170, 189-196, and 203-210; these read CDTCGGSG, CGTCGGAG, CPNCGGTG, and CNACGGQG.

It belongs to the DnaJ family. Homodimer. It depends on Zn(2+) as a cofactor.

It is found in the cytoplasm. Functionally, participates actively in the response to hyperosmotic and heat shock by preventing the aggregation of stress-denatured proteins and by disaggregating proteins, also in an autonomous, DnaK-independent fashion. Unfolded proteins bind initially to DnaJ; upon interaction with the DnaJ-bound protein, DnaK hydrolyzes its bound ATP, resulting in the formation of a stable complex. GrpE releases ADP from DnaK; ATP binding to DnaK triggers the release of the substrate protein, thus completing the reaction cycle. Several rounds of ATP-dependent interactions between DnaJ, DnaK and GrpE are required for fully efficient folding. Also involved, together with DnaK and GrpE, in the DNA replication of plasmids through activation of initiation proteins. The protein is Chaperone protein DnaJ of Parasynechococcus marenigrum (strain WH8102).